We begin with the raw amino-acid sequence, 217 residues long: Octanoyltransferase (217 aa).

Residues 31–206 (KSVMDEAWLL…ELVSRLGYAE (176 aa)) enclose the BPL/LPL catalytic domain. Residues 70-77 (RGGQVTYH), 137-139 (SLG), and 150-152 (GLA) each bind substrate. Catalysis depends on Cys168, which acts as the Acyl-thioester intermediate.

Belongs to the LipB family.

The protein localises to the cytoplasm. The catalysed reaction is octanoyl-[ACP] + L-lysyl-[protein] = N(6)-octanoyl-L-lysyl-[protein] + holo-[ACP] + H(+). It participates in protein modification; protein lipoylation via endogenous pathway; protein N(6)-(lipoyl)lysine from octanoyl-[acyl-carrier-protein]: step 1/2. Functionally, catalyzes the transfer of endogenously produced octanoic acid from octanoyl-acyl-carrier-protein onto the lipoyl domains of lipoate-dependent enzymes. Lipoyl-ACP can also act as a substrate although octanoyl-ACP is likely to be the physiological substrate. The sequence is that of Octanoyltransferase from Pseudomonas aeruginosa (strain UCBPP-PA14).